Reading from the N-terminus, the 264-residue chain is Hydroxyethylthiazole kinase (264 aa).

Position 45 (M45) interacts with substrate. ATP contacts are provided by R121 and S167. Residue G194 participates in substrate binding.

This sequence belongs to the Thz kinase family. Mg(2+) serves as cofactor.

It catalyses the reaction 5-(2-hydroxyethyl)-4-methylthiazole + ATP = 4-methyl-5-(2-phosphooxyethyl)-thiazole + ADP + H(+). It participates in cofactor biosynthesis; thiamine diphosphate biosynthesis; 4-methyl-5-(2-phosphoethyl)-thiazole from 5-(2-hydroxyethyl)-4-methylthiazole: step 1/1. Functionally, catalyzes the phosphorylation of the hydroxyl group of 4-methyl-5-beta-hydroxyethylthiazole (THZ). In Aliivibrio salmonicida (strain LFI1238) (Vibrio salmonicida (strain LFI1238)), this protein is Hydroxyethylthiazole kinase.